We begin with the raw amino-acid sequence, 851 residues long: Envelope glycoprotein gp160 (851 aa).

The signal sequence occupies residues 1–24; that stretch reads MEPGRNQLLVAILLTSACLIYCKQ. Topologically, residues 25–669 are extracellular; the sequence is YVTVFYGIPA…LTSWIKYIQY (645 aa). N-linked (GlcNAc...) asparagine; by host glycosylation is present at N37. Cysteines 44 and 57 form a disulfide. N-linked (GlcNAc...) asparagine; by host glycans are attached at residues N70, N114, N127, N134, N142, N157, N184, N195, N227, N230, N261, N267, N278, N289, N299, N355, N361, N388, N398, N401, N438, N453, and N456. 5 disulfides stabilise this stretch: C101–C203, C108–C194, C113–C154, C216–C246, and C226–C238. Residues 113–153 form a V1 region; that stretch reads CNITSGTTATPSPPNITIIDENSTCIGDNNCTGLGKEEVVE. Residues 154-194 form a V2 region; sequence CEFNMTGLEQDKKRKYNDAWYSRDVVCDKTNGTGTCYMRHC. The V3 stretch occupies residues 294–327; sequence CKRPGNKTVVPITLMSGRRFHSRPVYNKKPGQAW. A disulfide bond links C294 and C328. 2 cysteine pairs are disulfide-bonded: C380/C437 and C387/C410. The V4 stretch occupies residues 387–410; that stretch reads CNMTWFLNWVENKTNQTHGNYAPC. The V5 stretch occupies residues 453 to 459; that stretch reads NQTNITF. The fusion peptide stretch occupies residues 502-522; it reads GVFVLGFLGFLATAGSAMGGA. Positions 565-581 are immunosuppression; the sequence is LQARVTAIEKYLKDQAQ. N-linked (GlcNAc...) asparagine; by host glycosylation is found at N601, N610, and N626. Positions 647-668 are MPER; binding to GalCer; the sequence is KLNSWDVFGNWFDLTSWIKYIQ. A helical membrane pass occupies residues 670–690; that stretch reads GVYIVVGIIGLRIAIYIVQLL. At 691–851 the chain is on the cytoplasmic side; the sequence is SRLRKGYRPV…IRQGAEIALL (161 aa). Positions 697-700 match the YXXV motif; contains endocytosis signal motif; it reads YRPV. Residue C763 is the site of S-palmitoyl cysteine; by host attachment. Positions 850-851 match the Di-leucine internalization motif motif; it reads LL.

As to quaternary structure, the mature envelope protein (Env) consists of a homotrimer of non-covalently associated gp120-gp41 heterodimers. The resulting complex protrudes from the virus surface as a spike. There seems to be as few as 10 spikes on the average virion. Interacts with human CD4, CCR5 and CXCR4, to form a P4HB/PDI-CD4-CXCR4-gp120 complex. Gp120 also interacts with the C-type lectins CD209/DC-SIGN and CLEC4M/DC-SIGNR (collectively referred to as DC-SIGN(R)). Gp120 and gp41 interact with GalCer. In terms of assembly, the mature envelope protein (Env) consists of a homotrimer of non-covalently associated gp120-gp41 heterodimers. The resulting complex protrudes from the virus surface as a spike. There seems to be as few as 10 spikes on the average virion. Specific enzymatic cleavages in vivo yield mature proteins. Envelope glycoproteins are synthesized as an inactive precursor that is heavily N-glycosylated and processed likely by host cell furin in the Golgi to yield the mature SU and TM proteins. The cleavage site between SU and TM requires the minimal sequence [KR]-X-[KR]-R. Post-translationally, palmitoylation of the transmembrane protein and of Env polyprotein (prior to its proteolytic cleavage) is essential for their association with host cell membrane lipid rafts. Palmitoylation is therefore required for envelope trafficking to classical lipid rafts, but not for viral replication.

It localises to the virion membrane. Its subcellular location is the host cell membrane. The protein localises to the host endosome membrane. Its function is as follows. The surface protein gp120 (SU) attaches the virus to the host lymphoid cell by binding to the primary receptor CD4. This interaction induces a structural rearrangement creating a high affinity binding site for a chemokine coreceptor like CXCR4 and/or CCR5. This peculiar 2 stage receptor-interaction strategy allows gp120 to maintain the highly conserved coreceptor-binding site in a cryptic conformation, protected from neutralizing antibodies. Since CD4 also displays a binding site for the disulfide-isomerase P4HB/PDI, a P4HB/PDI-CD4-CXCR4-gp120 complex may form. In that complex, P4HB/PDI could reach and reduce gp120 disulfide bonds, causing major conformational changes in gp120. TXN, another PDI family member could also be involved in disulfide rearrangements in Env during fusion. These changes are transmitted to the transmembrane protein gp41 and are thought to activate its fusogenic potential by unmasking its fusion peptide. The surface protein gp120 is a ligand for CD209/DC-SIGN and CLEC4M/DC-SIGNR, which are respectively found on dendritic cells (DCs), and on endothelial cells of liver sinusoids and lymph node sinuses. These interactions allow capture of viral particles at mucosal surfaces by these cells and subsequent transmission to permissive cells. DCs are professional antigen presenting cells, critical for host immunity by inducing specific immune responses against a broad variety of pathogens. They act as sentinels in various tissues where they take up antigen, process it, and present it to T-cells following migration to lymphoid organs. HIV subverts the migration properties of dendritic cells to gain access to CD4+ T-cells in lymph nodes. Virus transmission to permissive T-cells occurs either in trans (without DCs infection, through viral capture and transmission), or in cis (following DCs productive infection, through the usual CD4-gp120 interaction), thereby inducing a robust infection. In trans infection, bound virions remain infectious over days and it is proposed that they are not degraded, but protected in non-lysosomal acidic organelles within the DCs close to the cell membrane thus contributing to the viral infectious potential during DCs' migration from the periphery to the lymphoid tissues. On arrival at lymphoid tissues, intact virions recycle back to DCs' cell surface allowing virus transmission to CD4+ T-cells. Virion capture also seems to lead to MHC-II-restricted viral antigen presentation, and probably to the activation of HIV-specific CD4+ cells. In terms of biological role, the transmembrane protein gp41 (TM) acts as a class I viral fusion protein. Under the current model, the protein has at least 3 conformational states: pre-fusion native state, pre-hairpin intermediate state, and post-fusion hairpin state. During fusion of viral and target intracellular membranes, the coiled coil regions (heptad repeats) assume a trimer-of-hairpins structure, positioning the fusion peptide in close proximity to the C-terminal region of the ectodomain. The formation of this structure appears to drive apposition and subsequent fusion of viral and target cell membranes. Complete fusion occurs in host cell endosomes and is dynamin-dependent, however some lipid transfer might occur at the plasma membrane. The virus undergoes clathrin-dependent internalization long before endosomal fusion, thus minimizing the surface exposure of conserved viral epitopes during fusion and reducing the efficacy of inhibitors targeting these epitopes. Membranes fusion leads to delivery of the nucleocapsid into the cytoplasm. Functionally, the envelope glycoprotein gp160 precursor down-modulates cell surface CD4 antigen by interacting with it in the endoplasmic reticulum and blocking its transport to the cell surface. Its function is as follows. The gp120-gp41 heterodimer seems to contribute to T-cell depletion during HIV-1 infection. The envelope glycoproteins expressed on the surface of infected cells induce apoptosis through an interaction with uninfected cells expressing the receptor (CD4) and the coreceptors CXCR4 or CCR5. This type of bystander killing may be obtained by at least three distinct mechanisms. First, the interaction between the 2 cells can induce cellular fusion followed by nuclear fusion within the syncytium. Syncytia are condemned to die from apoptosis. Second, the 2 interacting cells may not fuse entirely and simply exchange plasma membrane lipids, after a sort of hemifusion process, followed by rapid death. Third, it is possible that virus-infected cells, on the point of undergoing apoptosis, fuse with CD4-expressing cells, in which case apoptosis is rapidly transmitted from one cell to the other and thus occurs in a sort of contagious fashion. The gp120-gp41 heterodimer allows rapid transcytosis of the virus through CD4 negative cells such as simple epithelial monolayers of the intestinal, rectal and endocervical epithelial barriers. Both gp120 and gp41 specifically recognize glycosphingolipids galactosyl-ceramide (GalCer) or 3' sulfo-galactosyl-ceramide (GalS) present in the lipid rafts structures of epithelial cells. Binding to these alternative receptors allows the rapid transcytosis of the virus through the epithelial cells. This transcytotic vesicle-mediated transport of virions from the apical side to the basolateral side of the epithelial cells does not involve infection of the cells themselves. The polypeptide is Envelope glycoprotein gp160 (env) (Human immunodeficiency virus type 2 subtype A (isolate D194) (HIV-2)).